Consider the following 159-residue polypeptide: Large ribosomal subunit protein uL15 (159 aa).

A compositionally biased stretch (basic and acidic residues) spans 1–18 (MKLNEIKDNEGSSKDRIR). The interval 1-39 (MKLNEIKDNEGSSKDRIRVGRGIGSGKGKTGGRGVKGQK) is disordered. Over residues 21-35 (RGIGSGKGKTGGRGV) the composition is skewed to gly residues.

Belongs to the universal ribosomal protein uL15 family. Part of the 50S ribosomal subunit.

Binds to the 23S rRNA. The protein is Large ribosomal subunit protein uL15 of Allorhizobium ampelinum (strain ATCC BAA-846 / DSM 112012 / S4) (Agrobacterium vitis (strain S4)).